We begin with the raw amino-acid sequence, 21 residues long: Brevinin-1OKb (21 aa).

The residue at position 21 (lysine 21) is a Lysine amide.

As to expression, expressed by the skin glands.

Its subcellular location is the secreted. Its function is as follows. Antimicrobial peptide. In Nidirana okinavana (Kampira Falls frog), this protein is Brevinin-1OKb.